The sequence spans 350 residues: uncharacterized protein (350 aa).

The next 3 helical transmembrane spans lie at Y10 to G30, F51 to T71, and I327 to F347.

Belongs to the 1-acyl-sn-glycerol-3-phosphate acyltransferase family.

Its subcellular location is the endoplasmic reticulum membrane. This is an uncharacterized protein from Schizosaccharomyces pombe (strain 972 / ATCC 24843) (Fission yeast).